We begin with the raw amino-acid sequence, 62 residues long: Calmodulin regulator protein PCP4 (62 aa).

The tract at residues 1-40 is disordered; that stretch reads MSERQGAGTTNGKDKPSGENDGQKKVQEEFDIDMDAPETE. A compositionally biased stretch (basic and acidic residues) spans 12–28; sequence GKDKPSGENDGQKKVQE. Residues 28-40 form an acidic; binds calcium and is required for modulating the calcium-binding kinetics of calmodulin region; it reads EEFDIDMDAPETE. An IQ domain is found at 39–62; sequence TERAAVAIQSQFRKFQKKKAGSQS.

It belongs to the PCP4 family. In terms of assembly, binds to both calcium-free and calcium-bound calmodulin. The affinity for the calcium-bound form is 50-fold greater.

In terms of biological role, functions as a modulator of calcium-binding by calmodulin. Thereby, regulates calmodulin activity and the different processes it controls. For instance, may play a role in neuronal differentiation through activation of calmodulin-dependent kinase signaling pathways. This chain is Calmodulin regulator protein PCP4, found in Bos taurus (Bovine).